Here is a 194-residue protein sequence, read N- to C-terminus: MNPVYSPGSSGVPYANAKGIGYPAGFPVGYAAAPAYSPNMYPGANPTFQTGYTPGTPYKVSCSPTSGAVPPYSSSPNPYQTAVYPVRSAYPQQSPYAQQGTYYTQPLYAAPPHVIHHTTVVQPNGMPATVYPAPIPPPRGSGVTMGMVAGTTMAMSAGTLLTAHSPTPVAPHPVTVPTYRAPGTPTYSYVPPQW.

Position 1 is an N-acetylmethionine (methionine 1). The Cytoplasmic segment spans residues 1-18; the sequence is MNPVYSPGSSGVPYANAK. Serine 6 is modified (phosphoserine). The helical transmembrane segment at 19–41 threads the bilayer; the sequence is GIGYPAGFPVGYAAAPAYSPNMY. At 42 to 141 the chain is on the extracellular side; it reads PGANPTFQTG…PAPIPPPRGS (100 aa). A glycan (N-linked (GlcNAc...) asparagine) is linked at asparagine 45. A helical transmembrane segment spans residues 142–163; it reads GVTMGMVAGTTMAMSAGTLLTA. The Cytoplasmic portion of the chain corresponds to 164 to 194; sequence HSPTPVAPHPVTVPTYRAPGTPTYSYVPPQW.

This sequence belongs to the FAM168 family. May form homodimers. May interact with DAZAP2, FAM168A, PRDX6, RBM6, TMTC1 and YPEL2. Interacts with CDC27. In terms of processing, N-glycosylated. In terms of tissue distribution, predominantly expressed in the brain, including olfactory bulb, cortex and cerebellum (at protein level).

It localises to the cytoplasm. The protein localises to the perinuclear region. Its subcellular location is the cell membrane. The protein resides in the cell projection. It is found in the axon. In terms of biological role, inhibitor of neuronal axonal outgrowth. Acts as a negative regulator of CDC42 and STAT3 and a positive regulator of STMN2. Positive regulator of CDC27. The chain is Myelin-associated neurite-outgrowth inhibitor (Fam168b) from Mus musculus (Mouse).